The following is a 205-amino-acid chain: Guanylate kinase (205 aa).

The region spanning 6-184 (GLLIVLSGPA…AVERIKAIVT (179 aa)) is the Guanylate kinase-like domain. Residue 13-20 (GPAGVGKG) coordinates ATP.

Belongs to the guanylate kinase family.

The protein resides in the cytoplasm. It catalyses the reaction GMP + ATP = GDP + ADP. In terms of biological role, essential for recycling GMP and indirectly, cGMP. This Shouchella clausii (strain KSM-K16) (Alkalihalobacillus clausii) protein is Guanylate kinase.